The chain runs to 2979 residues: Polyketide synthase-nonribosomal peptide synthetase TwmB (2979 aa).

The Ketosynthase family 3 (KS3) domain occupies glycine 5–serine 435. Residues cysteine 176, histidine 315, and histidine 355 each act as for beta-ketoacyl synthase activity in the active site. Residues valine 549–valine 864 form a malonyl-CoA:ACP transacylase (MAT) domain region. Residue serine 643 is the For malonyltransferase activity of the active site. The segment at histidine 936–alanine 1070 is N-terminal hotdog fold. Residues histidine 936 to alanine 1234 are dehydratase (DH) domain. The PKS/mFAS DH domain maps to histidine 936 to lysine 1235. The active-site Proton acceptor; for dehydratase activity is histidine 968. The interval leucine 1085–lysine 1235 is C-terminal hotdog fold. Aspartate 1141 functions as the Proton donor; for dehydratase activity in the catalytic mechanism. The inactive methyltransferase (MT) domain stretch occupies residues asparagine 1387–proline 1572. The tract at residues threonine 2098–valine 2271 is ketoreductase (KR)domain. The Carrier domain maps to arginine 2380–isoleucine 2465. Serine 2425 is modified (O-(pantetheine 4'-phosphoryl)serine). Residues tyrosine 2476–aspartate 2497 form a disordered region. The segment covering glutamate 2479–aspartate 2497 has biased composition (polar residues). The interval lysine 2534–glutamate 2970 is condensation.

As to quaternary structure, interacts with TwmE. Pantetheine 4'-phosphate is required as a cofactor.

The catalysed reaction is 5-aminopentanoate + 7 malonyl-CoA + acetyl-CoA + 11 NADPH + 17 H(+) = wortmanamide A + 7 CO2 + 11 NADP(+) + 8 CoA + 6 H2O. It carries out the reaction 5-aminopentanoate + 8 malonyl-CoA + acetyl-CoA + 13 NADPH + 20 H(+) = wortmanamide B + 8 CO2 + 13 NADP(+) + 9 CoA + 7 H2O. Its pathway is secondary metabolite biosynthesis. In terms of biological role, polyketide synthase-nonribosomal peptide synthetase; part of the gene cluster that mediates the biosynthesis of wortmanamides A and B, reduced long-chain polyketides amidated with a specific omega-amino acid, 5-aminopentanoic acid (5PA). The PKS modules of TwmB are involved in the synthesis of the polyketide backbone, whereas the non-canonical C domain of TwmB is a bonafide condensation domain that specifically selects 5PA and catalyzes amidation to release polyketide chain. The C domain clearly prefers C16 and C18 fatty acyl substrates, which is consistent with simultaneous formation of both octaketide and nonaketide acyl amides wortmanamides A and B. Because TwmB lacks a designated enoylreductase (ER) domain, the required activity is provided the enoyl reductase TwmE. The roles of the remaining enzymes have still to be clarified. This chain is Polyketide synthase-nonribosomal peptide synthetase TwmB, found in Talaromyces wortmannii (Penicillium wortmannii).